The primary structure comprises 336 residues: Anthranilate phosphoribosyltransferase (336 aa).

5-phospho-alpha-D-ribose 1-diphosphate contacts are provided by residues G82, 85–86, T90, 92–95, 110–118, and S122; these read GD, NVST, and KHGNRSVSS. G82 is a binding site for anthranilate. S94 serves as a coordination point for Mg(2+). N113 is a binding site for anthranilate. Position 168 (R168) interacts with anthranilate. Mg(2+) is bound by residues D227 and E228.

The protein belongs to the anthranilate phosphoribosyltransferase family. As to quaternary structure, homodimer. The cofactor is Mg(2+).

The enzyme catalyses N-(5-phospho-beta-D-ribosyl)anthranilate + diphosphate = 5-phospho-alpha-D-ribose 1-diphosphate + anthranilate. It functions in the pathway amino-acid biosynthesis; L-tryptophan biosynthesis; L-tryptophan from chorismate: step 2/5. Functionally, catalyzes the transfer of the phosphoribosyl group of 5-phosphorylribose-1-pyrophosphate (PRPP) to anthranilate to yield N-(5'-phosphoribosyl)-anthranilate (PRA). The sequence is that of Anthranilate phosphoribosyltransferase from Leptospira borgpetersenii serovar Hardjo-bovis (strain JB197).